The chain runs to 276 residues: Ice-binding protein (276 aa).

An N-terminal signal peptide occupies residues 1–24 (MKILKRIPVLAVLLVGLMTNCSND). An Ice-binding site motif (T-A/G-X-T/N) 1 motif is present at residues 79–82 (TGIT). An intrachain disulfide couples C107 to C124. Short sequence motifs (ice-binding site motif (T-A/G-X-T/N)) lie at residues 245-248 (TGIN) and 263-266 (TAVT).

It belongs to the ice-binding protein family. In terms of assembly, monomer.

Its subcellular location is the secreted. In terms of biological role, has antifreeze activity for survival in a subzero environment. Binds to the surface of ice crystals and inhibits their growth. Has high thermal hysteresis (TH) activity, which is the ability to lower the freezing point of an aqueous solution below its melting point, and thus the freezing of the cell fluid can be prevented protecting the organism from ice damage. The TH activity of this protein is 2.2 degrees Celsius at 5 uM and 2.5 degrees Celsius at 50 uM. In Flavobacterium frigoris (strain PS1), this protein is Ice-binding protein.